The sequence spans 858 residues: Tetratricopeptide repeat protein 7A (858 aa).

S51 bears the Phosphoserine mark. 6 TPR repeats span residues 121 to 157, 177 to 210, 414 to 447, 497 to 531, 533 to 565, and 566 to 599; these read CEAM…MENK, ERLP…AQVF, FHLW…RPSD, YSLQ…APSD, QVIL…RKDD, and AHAL…HPEN. At S182 the chain carries Phosphoserine. A phosphoserine mark is found at S647, S678, S679, and S690. Residue T693 is modified to Phosphothreonine. TPR repeat units lie at residues 745-778, 780-812, and 813-846; these read HSVL…NPDG, RIMH…QSTC, and HEAW…EASS.

In terms of assembly, component of a phosphatidylinositol 4-kinase (PI4K) complex, composed of PI4KA, EFR3 (EFR3A or EFR3B), TTC7 (TTC7A or TTC7B) and HYCC (HYCC1 or HYCC2). Interacts with PI4KA. Interaction with PI4KA is direct. Interacts with EFR3 (EFR3A or EFR3B), interaction is direct. Interacts with HYCC (HYCC1 or HYCC2), interaction is direct. Association with the PI4K complex is strongly reduced by TMEM150A. Expressed in epithelial cells of the intestine, thymus, and pancreas (at protein level).

Its subcellular location is the cytoplasm. It is found in the cell membrane. In terms of biological role, component of a complex required to localize phosphatidylinositol 4-kinase (PI4K) to the plasma membrane. The complex acts as a regulator of phosphatidylinositol 4-phosphate (PtdIns(4)P) synthesis. In the complex, plays a central role in bridging PI4KA to EFR3B and HYCC1, via direct interactions. In Homo sapiens (Human), this protein is Tetratricopeptide repeat protein 7A.